Consider the following 323-residue polypeptide: Beta-ketoacyl-[acyl-carrier-protein] synthase III (323 aa).

Active-site residues include Cys-112 and His-248. Residues 249–253 (QANRR) are ACP-binding. The active site involves Asn-278.

It belongs to the thiolase-like superfamily. FabH family. Homodimer.

It localises to the cytoplasm. The catalysed reaction is malonyl-[ACP] + acetyl-CoA + H(+) = 3-oxobutanoyl-[ACP] + CO2 + CoA. It participates in lipid metabolism; fatty acid biosynthesis. Functionally, catalyzes the condensation reaction of fatty acid synthesis by the addition to an acyl acceptor of two carbons from malonyl-ACP. Catalyzes the first condensation reaction which initiates fatty acid synthesis and may therefore play a role in governing the total rate of fatty acid production. Possesses both acetoacetyl-ACP synthase and acetyl transacylase activities. Its substrate specificity determines the biosynthesis of branched-chain and/or straight-chain of fatty acids. The chain is Beta-ketoacyl-[acyl-carrier-protein] synthase III from Streptococcus agalactiae serotype Ia (strain ATCC 27591 / A909 / CDC SS700).